We begin with the raw amino-acid sequence, 339 residues long: Protein FAM50A (339 aa).

The interval 1-31 is disordered; sequence MAQYKGAASEAGRAMHLMKKREKQREQMEQM. N-acetylalanine is present on A2. K100 is covalently cross-linked (Glycyl lysine isopeptide (Lys-Gly) (interchain with G-Cter in SUMO2)). A disordered region spans residues 121-177; it reads SFTLEEEEEGGEEEEEAAMYEEEMEREEITTKKRKLGKNPDVDTSFLPDRDREEEEN. Residues 124-146 show a composition bias toward acidic residues; sequence LEEEEEGGEEEEEAAMYEEEMER. Positions 152-155 match the Nuclear localization signal motif; it reads KKRK. Positions 168–177 are enriched in basic and acidic residues; the sequence is PDRDREEEEN.

This sequence belongs to the FAM50 family. Interacts with EFTUD2, a component of the spliceosome U5 complex. Interacts with DDX41, a component of the spliceosome C complex. As to expression, widely expressed in fetal and adult tissues. Mostly abundant in fetal brain, liver and kidney; in the adult, high levels were also observed in heart, skeletal muscle, spleen, thymus, prostate and small intestine. Expressed in fetal cerebellum and hypothalamus. Low expression is observed in fetal temporal lobe.

The protein localises to the nucleus. Probably involved in the regulation of pre-mRNA splicing. This Homo sapiens (Human) protein is Protein FAM50A (FAM50A).